A 189-amino-acid chain; its full sequence is HTH-type transcriptional repressor AcnR (189 aa).

An HTH tetR-type domain is found at 10-70 (AERKVEILSG…EVAHEDMRKM (61 aa)). A DNA-binding region (H-T-H motif) is located at residues 33–52 (TVARLEETIGKSRGAIFHHY). Citrate contacts are provided by residues 79–80 (LI), Arg130, and Gln134. A Mg(2+)-binding site is contributed by Glu181. Position 185 (Arg185) interacts with citrate.

As to quaternary structure, homodimer.

AcnR negatively controls the expression of the aconitase gene acn. The chain is HTH-type transcriptional repressor AcnR from Corynebacterium jeikeium (strain K411).